Reading from the N-terminus, the 709-residue chain is Rho guanine nucleotide exchange factor 16 (709 aa).

At Ala-2 the chain carries N-acetylalanine. Ser-6, Ser-41, and Ser-107 each carry phosphoserine. The segment at 22–70 is disordered; it reads ELRLDAGGNPASGLPMVRGSPRVRDDAAFQPQVPAPPQPRPPGHEEPWP. The interval 114 to 146 is disordered; sequence SREAARRDPKLLPAPSFSLDDMDVDKDPGGMLR. Residues Ser-174, Ser-191, and Ser-208 each carry the phosphoserine modification. The segment at 180-246 is disordered; the sequence is LAEEPSQPHT…ESSSPEGTQK (67 aa). The span at 191–207 shows a compositional bias: basic residues; the sequence is SPAKNKKTLGRKRGHKG. Thr-226 is subject to Phosphothreonine. Phosphoserine occurs at positions 227, 230, and 240. The interval 275-481 is required for RHOG activation and mediates interaction with EPHA2; the sequence is LDQLSTEERK…MERMEQMYTL (207 aa). The region spanning 284–468 is the DH domain; the sequence is KRQEAMFEIL…SKLVRQCNEG (185 aa). Residues 501–620 enclose the PH domain; the sequence is WLLKRGELFL…WIVALTHSER (120 aa). An SH3 domain is found at 629–689; that stretch reads GDLPQVEITK…PEDFARFITS (61 aa). The PDZ-binding motif motif lies at 707-709; the sequence is TDV.

In terms of assembly, interacts with ELMO2, EPHA2, RAC1 and RHOG; mediates activation of RAC1 by EPHA2. Interacts with TAX1BP3 (via PDZ domain). May interact with CDC42; stimulated by HPV16 E6.

It is found in the cytoplasm. Its function is as follows. Guanyl-nucleotide exchange factor of the RHOG GTPase stimulating the exchange of RHOG-associated GDP for GTP. May play a role in chemotactic cell migration by mediating the activation of RAC1 by EPHA2. May also activate CDC42 and mediate activation of CDC42 by the viral protein HPV16 E6. The sequence is that of Rho guanine nucleotide exchange factor 16 (ARHGEF16) from Homo sapiens (Human).